The chain runs to 245 residues: tRNA pseudouridine synthase A 2 (245 aa).

The active-site Nucleophile is the Asp-53. Tyr-111 lines the substrate pocket.

The protein belongs to the tRNA pseudouridine synthase TruA family. In terms of assembly, homodimer.

It carries out the reaction uridine(38/39/40) in tRNA = pseudouridine(38/39/40) in tRNA. Functionally, formation of pseudouridine at positions 38, 39 and 40 in the anticodon stem and loop of transfer RNAs. The polypeptide is tRNA pseudouridine synthase A 2 (Bacillus anthracis).